We begin with the raw amino-acid sequence, 445 residues long: Putative transcription factor bHLH056 (445 aa).

Disordered regions lie at residues 36–70 (NQTHRQSYDPPPILRGSGSGRGEENAPLSQPPPHL), 224–260 (QIQPATESKLKAREETHGTEEARGSTSRKRSRTAEMH), and 365–445 (PFPN…QPTA). Positions 231–246 (SKLKAREETHGTEEAR) are enriched in basic and acidic residues. The bHLH domain occupies 255–304 (RTAEMHNLAERRRREKINEKMKTLQQLIPRCNKSTKVSTLDDAIEYVKSL). A compositionally biased stretch (low complexity) spans 418-433 (QGQTTSQLSSGQASSS).

As to quaternary structure, homodimer.

It localises to the nucleus. The polypeptide is Putative transcription factor bHLH056 (BHLH56) (Arabidopsis thaliana (Mouse-ear cress)).